The chain runs to 415 residues: DNA polymerase IV 2 (415 aa).

The UmuC domain maps to 7 to 183 (ILHADLDAFY…LPVSLMWGVG (177 aa)). Aspartate 11 and aspartate 101 together coordinate Mg(2+). Residue glutamate 102 is part of the active site.

The protein belongs to the DNA polymerase type-Y family. As to quaternary structure, monomer. Mg(2+) is required as a cofactor.

The protein localises to the cytoplasm. It carries out the reaction DNA(n) + a 2'-deoxyribonucleoside 5'-triphosphate = DNA(n+1) + diphosphate. Its function is as follows. Poorly processive, error-prone DNA polymerase involved in untargeted mutagenesis. Copies undamaged DNA at stalled replication forks, which arise in vivo from mismatched or misaligned primer ends. These misaligned primers can be extended by PolIV. Exhibits no 3'-5' exonuclease (proofreading) activity. May be involved in translesional synthesis, in conjunction with the beta clamp from PolIII. The chain is DNA polymerase IV 2 (dinB2) from Mesorhizobium japonicum (strain LMG 29417 / CECT 9101 / MAFF 303099) (Mesorhizobium loti (strain MAFF 303099)).